A 380-amino-acid chain; its full sequence is E3 ubiquitin-protein ligase Iruka (380 aa).

The disordered stretch occupies residues 50–92 (APEMDSSTAGASGSARSGSSGSGSSGSHDTLSRGSSSSGSQVN). 2 stretches are compositionally biased toward low complexity: residues 55–68 (SSTAGASGSARSGS) and 74–89 (SGSHDTLSRGSSSSGS). An RING-type; atypical zinc finger spans residues 253–294 (CSICWDDFKIDETVRKLPCSHLYHENCIVPWLNLHSTCPICR). Residues 317–367 (EMAADGSNSERRSASTATGTDNPSPANNPSQAAAEGGRTRPDANPAQAARN) are disordered. Positions 338 to 350 (NPSPANNPSQAAA) are enriched in low complexity.

As to quaternary structure, interacts (via N-terminus) with CG7546 (via Ubl domain).

It catalyses the reaction S-ubiquitinyl-[E2 ubiquitin-conjugating enzyme]-L-cysteine + [acceptor protein]-L-lysine = [E2 ubiquitin-conjugating enzyme]-L-cysteine + N(6)-ubiquitinyl-[acceptor protein]-L-lysine.. It participates in protein modification; protein ubiquitination. Its function is as follows. E3 ubiquitin-protein ligase that mediates E2-dependent, 'Lys-48'- and/or 'Lys-63'-linked polyubiquitination of substrates. Recognizes miRNA-empty Ago1 and triggers its degradation via polyubiquitination independently of the Bag6 complex. By targeting miRNA-empty Ago1, eliminates dysfunctional Ago1 not able to bind miRNA and thereby plays a role in the quality control of miRNA-mediated silencing. This Drosophila melanogaster (Fruit fly) protein is E3 ubiquitin-protein ligase Iruka.